The chain runs to 874 residues: Dynein regulatory complex subunit 7 (874 aa).

Positions 1-20 (MEVLREKVEEEEEAEREEAA) are disordered. 2 coiled-coil regions span residues 1-67 (MEVL…SAEL) and 257-297 (RFEQ…DALH). Positions 386-400 (TEEDDSGINDEDDVE) are enriched in acidic residues. The tract at residues 386 to 410 (TEEDDSGINDEDDVENLGKEDEDKS) is disordered. A compositionally biased stretch (basic and acidic residues) spans 401-410 (NLGKEDEDKS).

The protein belongs to the DRC7 family. Component of the nexin-dynein regulatory complex (N-DRC). Interacts with TCTE1/DRC5. Interacts with DRC3 and GAS8/DRC4. Expressed in the testis.

It is found in the cell projection. The protein localises to the cilium. The protein resides in the flagellum. Its subcellular location is the cytoplasm. It localises to the cytoskeleton. It is found in the cilium axoneme. The protein localises to the flagellum axoneme. Its function is as follows. Component of the nexin-dynein regulatory complex (N-DRC) a key regulator of ciliary/flagellar motility which maintains the alignment and integrity of the distal axoneme and regulates microtubule sliding in motile axonemes. Involved in the regulation of flagellar motility. Essential for male fertility, sperm head morphogenesis and sperm flagellum formation. In Pan troglodytes (Chimpanzee), this protein is Dynein regulatory complex subunit 7 (DRC7).